The sequence spans 277 residues: Transcription factor WRKY19 (277 aa).

A DNA-binding region (WRKY) is located at residues 100 to 168 (QDTASLDDGL…YLGDHTCGQA (69 aa)).

It belongs to the WRKY group III family.

Its subcellular location is the nucleus. In terms of biological role, may play a role in defense responses. This is Transcription factor WRKY19 from Oryza sativa subsp. japonica (Rice).